A 154-amino-acid polypeptide reads, in one-letter code: Putative pre-16S rRNA nuclease (154 aa).

This sequence belongs to the YqgF nuclease family.

It localises to the cytoplasm. In terms of biological role, could be a nuclease involved in processing of the 5'-end of pre-16S rRNA. The chain is Putative pre-16S rRNA nuclease from Gluconacetobacter diazotrophicus (strain ATCC 49037 / DSM 5601 / CCUG 37298 / CIP 103539 / LMG 7603 / PAl5).